Consider the following 611-residue polypeptide: Phosphomethylpyrimidine synthase (611 aa).

Substrate is bound by residues N218, M247, Y276, H312, 332-334, 373-376, and E412; these read SRG and DGLR. H416 lines the Zn(2+) pocket. Y439 is a binding site for substrate. H480 serves as a coordination point for Zn(2+). [4Fe-4S] cluster-binding residues include C560, C563, and C568.

The protein belongs to the ThiC family. In terms of assembly, homodimer. It depends on [4Fe-4S] cluster as a cofactor.

The catalysed reaction is 5-amino-1-(5-phospho-beta-D-ribosyl)imidazole + S-adenosyl-L-methionine = 4-amino-2-methyl-5-(phosphooxymethyl)pyrimidine + CO + 5'-deoxyadenosine + formate + L-methionine + 3 H(+). It participates in cofactor biosynthesis; thiamine diphosphate biosynthesis. In terms of biological role, catalyzes the synthesis of the hydroxymethylpyrimidine phosphate (HMP-P) moiety of thiamine from aminoimidazole ribotide (AIR) in a radical S-adenosyl-L-methionine (SAM)-dependent reaction. The chain is Phosphomethylpyrimidine synthase from Caulobacter sp. (strain K31).